A 343-amino-acid chain; its full sequence is Anthranilate phosphoribosyltransferase (343 aa).

5-phospho-alpha-D-ribose 1-diphosphate-binding positions include Gly-84, Gly-87 to Asp-88, Thr-92, Asn-94 to Thr-97, Lys-112 to Ser-120, and Ser-124. Gly-84 contributes to the anthranilate binding site. Mg(2+) is bound at residue Ser-96. Asn-115 is a binding site for anthranilate. Arg-170 contacts anthranilate. The Mg(2+) site is built by Asp-229 and Glu-230.

The protein belongs to the anthranilate phosphoribosyltransferase family. Homodimer. Mg(2+) serves as cofactor.

It catalyses the reaction N-(5-phospho-beta-D-ribosyl)anthranilate + diphosphate = 5-phospho-alpha-D-ribose 1-diphosphate + anthranilate. It participates in amino-acid biosynthesis; L-tryptophan biosynthesis; L-tryptophan from chorismate: step 2/5. Functionally, catalyzes the transfer of the phosphoribosyl group of 5-phosphorylribose-1-pyrophosphate (PRPP) to anthranilate to yield N-(5'-phosphoribosyl)-anthranilate (PRA). The chain is Anthranilate phosphoribosyltransferase from Bordetella pertussis (strain Tohama I / ATCC BAA-589 / NCTC 13251).